The following is a 252-amino-acid chain: 2-succinyl-6-hydroxy-2,4-cyclohexadiene-1-carboxylate synthase (252 aa).

This sequence belongs to the AB hydrolase superfamily. MenH family. As to quaternary structure, monomer.

It carries out the reaction 5-enolpyruvoyl-6-hydroxy-2-succinyl-cyclohex-3-ene-1-carboxylate = (1R,6R)-6-hydroxy-2-succinyl-cyclohexa-2,4-diene-1-carboxylate + pyruvate. Its pathway is quinol/quinone metabolism; 1,4-dihydroxy-2-naphthoate biosynthesis; 1,4-dihydroxy-2-naphthoate from chorismate: step 3/7. It functions in the pathway quinol/quinone metabolism; menaquinone biosynthesis. Catalyzes a proton abstraction reaction that results in 2,5-elimination of pyruvate from 2-succinyl-5-enolpyruvyl-6-hydroxy-3-cyclohexene-1-carboxylate (SEPHCHC) and the formation of 2-succinyl-6-hydroxy-2,4-cyclohexadiene-1-carboxylate (SHCHC). The sequence is that of 2-succinyl-6-hydroxy-2,4-cyclohexadiene-1-carboxylate synthase from Salmonella choleraesuis (strain SC-B67).